The chain runs to 239 residues: Small ribosomal subunit protein uS2 (239 aa).

The protein belongs to the universal ribosomal protein uS2 family.

This Francisella philomiragia subsp. philomiragia (strain ATCC 25017 / CCUG 19701 / FSC 153 / O#319-036) protein is Small ribosomal subunit protein uS2.